A 263-amino-acid polypeptide reads, in one-letter code: Acyl-[acyl-carrier-protein]--UDP-N-acetylglucosamine O-acyltransferase (263 aa).

Belongs to the transferase hexapeptide repeat family. LpxA subfamily. Homotrimer.

It is found in the cytoplasm. It catalyses the reaction a (3R)-hydroxyacyl-[ACP] + UDP-N-acetyl-alpha-D-glucosamine = a UDP-3-O-[(3R)-3-hydroxyacyl]-N-acetyl-alpha-D-glucosamine + holo-[ACP]. The protein operates within glycolipid biosynthesis; lipid IV(A) biosynthesis; lipid IV(A) from (3R)-3-hydroxytetradecanoyl-[acyl-carrier-protein] and UDP-N-acetyl-alpha-D-glucosamine: step 1/6. Involved in the biosynthesis of lipid A, a phosphorylated glycolipid that anchors the lipopolysaccharide to the outer membrane of the cell. The protein is Acyl-[acyl-carrier-protein]--UDP-N-acetylglucosamine O-acyltransferase of Caulobacter vibrioides (strain ATCC 19089 / CIP 103742 / CB 15) (Caulobacter crescentus).